A 346-amino-acid chain; its full sequence is Holliday junction branch migration complex subunit RuvB (346 aa).

Positions methionine 1–tyrosine 188 are large ATPase domain (RuvB-L). Residues leucine 27, arginine 28, glycine 69, lysine 72, threonine 73, threonine 74, glutamate 135–phenylalanine 137, arginine 178, tyrosine 188, and arginine 225 each bind ATP. Threonine 73 contacts Mg(2+). The segment at proline 189–aspartate 259 is small ATPAse domain (RuvB-S). Positions arginine 262 to glycine 346 are head domain (RuvB-H). 3 residues coordinate DNA: arginine 298, arginine 317, and arginine 322.

This sequence belongs to the RuvB family. In terms of assembly, homohexamer. Forms an RuvA(8)-RuvB(12)-Holliday junction (HJ) complex. HJ DNA is sandwiched between 2 RuvA tetramers; dsDNA enters through RuvA and exits via RuvB. An RuvB hexamer assembles on each DNA strand where it exits the tetramer. Each RuvB hexamer is contacted by two RuvA subunits (via domain III) on 2 adjacent RuvB subunits; this complex drives branch migration. In the full resolvosome a probable DNA-RuvA(4)-RuvB(12)-RuvC(2) complex forms which resolves the HJ.

It localises to the cytoplasm. It carries out the reaction ATP + H2O = ADP + phosphate + H(+). Its function is as follows. The RuvA-RuvB-RuvC complex processes Holliday junction (HJ) DNA during genetic recombination and DNA repair, while the RuvA-RuvB complex plays an important role in the rescue of blocked DNA replication forks via replication fork reversal (RFR). RuvA specifically binds to HJ cruciform DNA, conferring on it an open structure. The RuvB hexamer acts as an ATP-dependent pump, pulling dsDNA into and through the RuvAB complex. RuvB forms 2 homohexamers on either side of HJ DNA bound by 1 or 2 RuvA tetramers; 4 subunits per hexamer contact DNA at a time. Coordinated motions by a converter formed by DNA-disengaged RuvB subunits stimulates ATP hydrolysis and nucleotide exchange. Immobilization of the converter enables RuvB to convert the ATP-contained energy into a lever motion, pulling 2 nucleotides of DNA out of the RuvA tetramer per ATP hydrolyzed, thus driving DNA branch migration. The RuvB motors rotate together with the DNA substrate, which together with the progressing nucleotide cycle form the mechanistic basis for DNA recombination by continuous HJ branch migration. Branch migration allows RuvC to scan DNA until it finds its consensus sequence, where it cleaves and resolves cruciform DNA. The sequence is that of Holliday junction branch migration complex subunit RuvB from Halorhodospira halophila (strain DSM 244 / SL1) (Ectothiorhodospira halophila (strain DSM 244 / SL1)).